Consider the following 286-residue polypeptide: Acetylglutamate kinase (286 aa).

Residues 70–71, R92, and N184 contribute to the substrate site; that span reads GG.

It belongs to the acetylglutamate kinase family. ArgB subfamily.

Its subcellular location is the cytoplasm. The catalysed reaction is N-acetyl-L-glutamate + ATP = N-acetyl-L-glutamyl 5-phosphate + ADP. It participates in amino-acid biosynthesis; L-arginine biosynthesis; N(2)-acetyl-L-ornithine from L-glutamate: step 2/4. Its function is as follows. Catalyzes the ATP-dependent phosphorylation of N-acetyl-L-glutamate. In Ruegeria sp. (strain TM1040) (Silicibacter sp.), this protein is Acetylglutamate kinase.